The primary structure comprises 764 residues: 5-methyltetrahydropteroyltriglutamate--homocysteine methyltransferase (764 aa).

Residues 16 to 19 and Lys-121 each bind 5-methyltetrahydropteroyltri-L-glutamate; that span reads RELK. L-homocysteine contacts are provided by residues 440-442 and Glu-493; that span reads IGS. L-methionine contacts are provided by residues 440-442 and Glu-493; that span reads IGS. 5-methyltetrahydropteroyltri-L-glutamate is bound by residues 524–525 and Trp-570; that span reads RC. An L-homocysteine-binding site is contributed by Asp-608. Asp-608 is an L-methionine binding site. Glu-614 is a binding site for 5-methyltetrahydropteroyltri-L-glutamate. 3 residues coordinate Zn(2+): His-650, Cys-652, and Glu-674. The active-site Proton donor is His-703. Cys-735 is a binding site for Zn(2+).

Belongs to the vitamin-B12 independent methionine synthase family. Zn(2+) serves as cofactor.

The enzyme catalyses 5-methyltetrahydropteroyltri-L-glutamate + L-homocysteine = tetrahydropteroyltri-L-glutamate + L-methionine. Its pathway is amino-acid biosynthesis; L-methionine biosynthesis via de novo pathway; L-methionine from L-homocysteine (MetE route): step 1/1. In terms of biological role, catalyzes the transfer of a methyl group from 5-methyltetrahydrofolate to homocysteine resulting in methionine formation. The chain is 5-methyltetrahydropteroyltriglutamate--homocysteine methyltransferase from Burkholderia cenocepacia (strain ATCC BAA-245 / DSM 16553 / LMG 16656 / NCTC 13227 / J2315 / CF5610) (Burkholderia cepacia (strain J2315)).